Here is a 214-residue protein sequence, read N- to C-terminus: MRSGLIGRKLGMSQMFTEDGQRIPVTLVQLGPCAVVAKRSDEQDGYNAVQLGFEEAKPSRLSKTVRGQYAKANVTPRRVLREFRVSNPESYEVGQELTAEQFAVDSFVDVTGKTVGKGFAGVMKRWGFRGGRASHGAHKVHRSGGSIGQCQTPGRVYKNKKMAGHMGQQTRTVQNLKVAYVDAVQSIIAVKGSIPGSKGSLVLVRDALKKGSAE.

At glutamine 151 the chain carries N5-methylglutamine.

Belongs to the universal ribosomal protein uL3 family. In terms of assembly, part of the 50S ribosomal subunit. Forms a cluster with proteins L14 and L19. In terms of processing, methylated by PrmB.

Its function is as follows. One of the primary rRNA binding proteins, it binds directly near the 3'-end of the 23S rRNA, where it nucleates assembly of the 50S subunit. The protein is Large ribosomal subunit protein uL3 of Magnetococcus marinus (strain ATCC BAA-1437 / JCM 17883 / MC-1).